The primary structure comprises 79 residues: MGGISIWQLLIIALIVVLLFGTKKLRSLGGDLGGAVKGFKNAMSSEEDKKALEDTEAAKTAQTTQQATEKKPESNKEQA.

Residues 1–21 form a helical membrane-spanning segment; the sequence is MGGISIWQLLIIALIVVLLFG. A disordered region spans residues 43 to 79; it reads MSSEEDKKALEDTEAAKTAQTTQQATEKKPESNKEQA. Over residues 46–57 the composition is skewed to basic and acidic residues; the sequence is EEDKKALEDTEA. Over residues 58 to 67 the composition is skewed to low complexity; sequence AKTAQTTQQA. Positions 68-79 are enriched in basic and acidic residues; that stretch reads TEKKPESNKEQA.

Belongs to the TatA/E family. In terms of assembly, the Tat system comprises two distinct complexes: a TatABC complex, containing multiple copies of TatA, TatB and TatC subunits, and a separate TatA complex, containing only TatA subunits. Substrates initially bind to the TatABC complex, which probably triggers association of the separate TatA complex to form the active translocon.

The protein resides in the cell inner membrane. Its function is as follows. Part of the twin-arginine translocation (Tat) system that transports large folded proteins containing a characteristic twin-arginine motif in their signal peptide across membranes. TatA could form the protein-conducting channel of the Tat system. This is Sec-independent protein translocase protein TatA from Shewanella putrefaciens (strain CN-32 / ATCC BAA-453).